Consider the following 181-residue polypeptide: Large ribosomal subunit protein uL5 (181 aa).

The protein belongs to the universal ribosomal protein uL5 family. Part of the 50S ribosomal subunit; part of the 5S rRNA/L5/L18/L25 subcomplex. Contacts the 5S rRNA and the P site tRNA. Forms a bridge to the 30S subunit in the 70S ribosome.

Functionally, this is one of the proteins that bind and probably mediate the attachment of the 5S RNA into the large ribosomal subunit, where it forms part of the central protuberance. In the 70S ribosome it contacts protein S13 of the 30S subunit (bridge B1b), connecting the 2 subunits; this bridge is implicated in subunit movement. Contacts the P site tRNA; the 5S rRNA and some of its associated proteins might help stabilize positioning of ribosome-bound tRNAs. This is Large ribosomal subunit protein uL5 from Acaryochloris marina (strain MBIC 11017).